The following is a 240-amino-acid chain: tRNA (guanine-N(1)-)-methyltransferase (240 aa).

S-adenosyl-L-methionine contacts are provided by residues G112 and 132–137 (LGDFVL).

The protein belongs to the RNA methyltransferase TrmD family. Homodimer.

The protein localises to the cytoplasm. The catalysed reaction is guanosine(37) in tRNA + S-adenosyl-L-methionine = N(1)-methylguanosine(37) in tRNA + S-adenosyl-L-homocysteine + H(+). In terms of biological role, specifically methylates guanosine-37 in various tRNAs. This is tRNA (guanine-N(1)-)-methyltransferase from Cyanothece sp. (strain PCC 7425 / ATCC 29141).